The sequence spans 247 residues: Probable transcriptional regulatory protein Asuc_1803 (247 aa).

Belongs to the TACO1 family.

Its subcellular location is the cytoplasm. The sequence is that of Probable transcriptional regulatory protein Asuc_1803 from Actinobacillus succinogenes (strain ATCC 55618 / DSM 22257 / CCUG 43843 / 130Z).